Consider the following 584-residue polypeptide: MLSLTMLLLERVGLIIILAYVLMNIPYFKNLMNRRRTWKARWQLCIIFSLFALMSNLTGIVIDHQHSLSGSVYFRLDDDVSLANTRVLTIGVAGLVGGPFVGLFVGVISGIFRVYMGGADAQVYLISSIFIGIIAGYFGLQAQRRKRYPSIAKSAMIGIVMEMIQMLSILTFSHDKAYAVDLISLIALPMIIVNSVGTAIFMSIIISTLKQEEQMKAVQTHDVLQLMNQTLPYFKEGLNRESAQQIAMIIKNLMKVSAVAITSKNEILSHVGAGSDHHIPTNEILTSLSKDVLKSGKLKEVHTKEEIGCSHPNCPLRAAIVIPLEMHGSIVGTLKMYFTNPNDLTFVERQLAEGLANIFSSQIELGEAETQSKLLKDAEIKSLQAQVSPHFFFNSINTISALVRINSEKARELLLELSYFFRANLQGSKQHTITLDKELSQVRAYLSLEQARYPGRFNININVEDKYRNVLVPPFLIQILVENAIKHAFTNRKQGNDIDVSVIKETATHVRIIVQDNGQGISKDKMHLLGETSVESESGTGSALENLNLRLKGLFGKSAALQFESTSSGTTFWCVLPYERQEEE.

The next 6 helical transmembrane spans lie at 6 to 28, 40 to 62, 88 to 110, 123 to 140, 155 to 172, and 184 to 206; these read MLLL…IPYF, ARWQ…GIVI, LTIG…VISG, VYLI…YFGL, AMIG…ILTF, and SLIA…SIII. One can recognise a GAF domain in the interval 311 to 362; that stretch reads HPNCPLRAAIVIPLEMHGSIVGTLKMYFTNPNDLTFVERQLAEGLANIFSSQ. In terms of domain architecture, Histidine kinase spans 363 to 580; sequence IELGEAETQS…TFWCVLPYER (218 aa). Residue His-390 is modified to Phosphohistidine; by autocatalysis.

Post-translationally, autophosphorylated on His-390.

It is found in the cell membrane. The catalysed reaction is ATP + protein L-histidine = ADP + protein N-phospho-L-histidine.. Functionally, member of the two-component regulatory system LytR/LytS that regulates genes involved in autolysis, programmed cell death, biofilm formation and cell wall metabolism. Also participates in sensing and responding to host defense cationic antimicrobial peptides (HDPs). Functions as a sensor protein kinase which is autophosphorylated at a histidine residue and transfers its phosphate group to the conserved aspartic acid residue in the regulatory domain of LytR. In turn, LytR binds to the upstream promoter regions of target genes including lrgA and lrgB, to positively regulate their expression. Also possesses a phosphatase activity that dephosphorylates and thus inactivates LytR. The chain is Sensor histidine kinase/phosphatase LytS (lytS) from Staphylococcus aureus (strain MRSA252).